A 373-amino-acid chain; its full sequence is uncharacterized protein (373 aa).

Residues 180–202 traverse the membrane as a helical segment; sequence YYVVALGTLALGSILGYTAKYVW.

The protein localises to the membrane. This is an uncharacterized protein from Rickettsia prowazekii (strain Madrid E).